Reading from the N-terminus, the 366-residue chain is Lipase member J (366 aa).

The active-site Nucleophile is serine 141. Active-site charge relay system residues include aspartate 312 and histidine 341.

Belongs to the AB hydrolase superfamily. Lipase family.

This is Lipase member J (LIPJ) from Homo sapiens (Human).